The sequence spans 324 residues: Aspartate carbamoyltransferase catalytic subunit (324 aa).

Residues arginine 71 and threonine 72 each contribute to the carbamoyl phosphate site. Lysine 99 contributes to the L-aspartate binding site. Arginine 121, histidine 151, and glutamine 154 together coordinate carbamoyl phosphate. Positions 184 and 239 each coordinate L-aspartate. Glycine 280 and proline 281 together coordinate carbamoyl phosphate.

This sequence belongs to the aspartate/ornithine carbamoyltransferase superfamily. ATCase family. In terms of assembly, heterododecamer (2C3:3R2) of six catalytic PyrB chains organized as two trimers (C3), and six regulatory PyrI chains organized as three dimers (R2).

The enzyme catalyses carbamoyl phosphate + L-aspartate = N-carbamoyl-L-aspartate + phosphate + H(+). It participates in pyrimidine metabolism; UMP biosynthesis via de novo pathway; (S)-dihydroorotate from bicarbonate: step 2/3. Its function is as follows. Catalyzes the condensation of carbamoyl phosphate and aspartate to form carbamoyl aspartate and inorganic phosphate, the committed step in the de novo pyrimidine nucleotide biosynthesis pathway. The protein is Aspartate carbamoyltransferase catalytic subunit of Cupriavidus necator (strain ATCC 17699 / DSM 428 / KCTC 22496 / NCIMB 10442 / H16 / Stanier 337) (Ralstonia eutropha).